A 241-amino-acid polypeptide reads, in one-letter code: SURF1-like protein (241 aa).

The next 2 membrane-spanning stretches (helical) occupy residues 5–25 (LTVL…LNRL) and 199–219 (LEYA…YRIY).

This sequence belongs to the SURF1 family.

The protein resides in the cell membrane. The polypeptide is SURF1-like protein (Rickettsia bellii (strain RML369-C)).